A 580-amino-acid chain; its full sequence is 9,13-epoxylabda-14-ene synthase, chloroplastic (580 aa).

The N-terminal 32 residues, 1–32 (MSITFNLKIAPFSGPGIQRSKETFPATEIQIT), are a transit peptide targeting the chloroplast. The Mg(2+) site is built by aspartate 322, aspartate 326, asparagine 466, threonine 470, and glutamate 474. The DDXXD motif signature appears at 322 to 326 (DDFFD).

This sequence belongs to the terpene synthase family. Mg(2+) is required as a cofactor. Present in both leaves and flowers, with higher levels in leaves.

Its subcellular location is the plastid. It is found in the chloroplast. It catalyses the reaction peregrinol diphosphate = (13R)-9,13-epoxylabd-14-ene + diphosphate. It carries out the reaction (+)-copalyl diphosphate = miltiradiene + diphosphate. The catalysed reaction is 8-hydroxycopalyl diphosphate = (13R)-manoyl oxide + diphosphate. It functions in the pathway secondary metabolite biosynthesis; terpenoid biosynthesis. In terms of biological role, involved in the biosynthesis of labdane-type diterpenoid including marrubiin and other labdane-related furanoid diterpenoids with potential applications as anti-diabetics, analgesics or vasorelaxants. Terpene synthase the catalyzes the conversion of peregrinol diphosphate to 9,13(R)-epoxy-labd-14-ene, from (+)-copalyl diphosphate ((+)-CPP) to miltiradiene and from 8-hydroxycopalyl diphosphate (LPP, labda-13-en-8-ol diphosphate) to manoyl oxide. This chain is 9,13-epoxylabda-14-ene synthase, chloroplastic, found in Marrubium vulgare (White horehound).